Here is a 95-residue protein sequence, read N- to C-terminus: N(2)-fixation sustaining protein CowN (95 aa).

It belongs to the CowN family.

In terms of biological role, is required to sustain N(2)-dependent growth in the presence of low levels of carbon monoxide (CO). Probably acts by protecting the N(2) fixation ability of the nitrogenase complex, which is inactivated in the presence of CO. The sequence is that of N(2)-fixation sustaining protein CowN from Allochromatium vinosum (strain ATCC 17899 / DSM 180 / NBRC 103801 / NCIMB 10441 / D) (Chromatium vinosum).